The following is a 336-amino-acid chain: Fructose-1,6-bisphosphatase class 1 (336 aa).

The Mg(2+) site is built by Glu90, Asp112, Leu114, and Asp115. Substrate contacts are provided by residues 115–118 (DGSS), Asn211, and Lys277. Residue Glu283 coordinates Mg(2+).

It belongs to the FBPase class 1 family. Homotetramer. Mg(2+) is required as a cofactor.

The protein localises to the cytoplasm. It carries out the reaction beta-D-fructose 1,6-bisphosphate + H2O = beta-D-fructose 6-phosphate + phosphate. Its pathway is carbohydrate biosynthesis; gluconeogenesis. This chain is Fructose-1,6-bisphosphatase class 1, found in Pseudomonas aeruginosa (strain ATCC 15692 / DSM 22644 / CIP 104116 / JCM 14847 / LMG 12228 / 1C / PRS 101 / PAO1).